We begin with the raw amino-acid sequence, 1487 residues long: Collagen alpha-1(II) chain (1487 aa).

The first 25 residues, 1–25 (MIRLGAPQTLVLLTLLVAAVLRCHG), serve as a signal peptide directing secretion. The propeptide at 26–181 (QDVQKAGSCV…PPGLGGNFAA (156 aa)) is N-terminal propeptide. Residues 32–90 (GSCVQDGQRYNDKDVWKPEPCRICVCDTGTVLCDDIICEDMKDCLSPETPFGECCPICS) form the VWFC domain. Residues 96–1234 (ASGQPGPKGQ…GLGQREKGPD (1139 aa)) are disordered. 2 stretches are compositionally biased toward basic and acidic residues: residues 105 to 116 (QKGEPGDIKDIV) and 133 to 154 (PRGD…RDGE). Over residues 158 to 173 (PGNPGPPGPPGPPGPP) the composition is skewed to pro residues. Position 190 is a 5-hydroxylysine (K190). A glycan (O-linked (Gal...) hydroxylysine) is linked at K190. Over residues 192-203 (GGAQMGVMQGPM) the composition is skewed to low complexity. A triple-helical region region spans residues 201–1214 (GPMGPMGPRG…PGPPGPPGPP (1014 aa)). Positions 208–217 (PRGPPGPAGA) are enriched in pro residues. Residues P212, P218, P230, P233, P245, P248, P251, P260, P269, P278, P281, and P284 each carry the hydroxyproline modification. The span at 218–239 (PGPQGFQGNPGEPGEPGVSGPM) shows a compositional bias: low complexity. A compositionally biased stretch (pro residues) spans 241–250 (PRGPPGPPGK). Basic and acidic residues predominate over residues 251–265 (PGDDGEAGKPGKSGE). K287 is subject to 5-hydroxylysine. O-linked (Gal...) hydroxylysine glycosylation occurs at K287. The residue at position 293 (P293) is a Hydroxyproline. The residue at position 299 (K299) is a 5-hydroxylysine. A glycan (O-linked (Gal...) hydroxylysine) is linked at K299. The residue at position 305 (P305) is a Hydroxyproline. The residue at position 308 (K308) is a 5-hydroxylysine. O-linked (Gal...) hydroxylysine glycosylation is present at K308. The span at 310–320 (ESGSPGENGSP) shows a compositional bias: low complexity. A hydroxyproline mark is found at P314, P320, P329, P350, P356, P365, P368, and P371. Residues 335 to 350 (TGPAGAAGARGNDGQP) show a composition bias toward low complexity. A compositionally biased stretch (gly residues) spans 360 to 369 (GPAGGPGFPG). 2 stretches are compositionally biased toward low complexity: residues 370 to 382 (APGA…PTGA) and 391 to 431 (PRGE…AGAP). 5-hydroxylysine is present on K374. O-linked (Gal...) hydroxylysine glycosylation is present at K374. Hydroxyproline is present on residues P395, P398, P401, P410, and P416. 5-hydroxylysine is present on K419. 4 positions are modified to hydroxyproline: P425, P431, P434, and P440. Residues 433–442 (FPGPRGPPGP) are compositionally biased toward pro residues. 5-hydroxylysine is present on K452. A Hydroxyproline modification is found at P458. 5-hydroxylysine is present on residues K464 and K470. Hydroxyproline occurs at positions 473, 482, 497, 506, 512, and 518. K527 carries the 5-hydroxylysine modification. A Hydroxyproline modification is found at P530. Position 542 is a 5-hydroxylysine (K542). A hydroxyproline mark is found at P551, P557, P566, P581, P587, P590, P599, and P605. Position 608 is a 5-hydroxylysine (K608). O-linked (Gal...) hydroxylysine glycosylation occurs at K608. P614 carries the hydroxyproline modification. 5-hydroxylysine is present on K620. K620 carries O-linked (Gal...) hydroxylysine glycosylation. Over residues 622-631 (LPGAPGLRGL) the composition is skewed to low complexity. Residues P623, P626, P632, P644, P659, and P668 each carry the hydroxyproline modification. The segment covering 656–667 (QGAPGPSGFQGL) has biased composition (low complexity). P670 is subject to 3-hydroxyproline. P671 and P674 each carry hydroxyproline. Low complexity predominate over residues 721–736 (LPGTPGTDGPKGAAGP). The span at 764-775 (KGDRGDVGEKGP) shows a compositional bias: basic and acidic residues. 2 stretches are compositionally biased toward low complexity: residues 833–848 (AGFA…PGAK) and 877–913 (PTGV…SNGN). P907 is modified (3-hydroxyproline). P908, P914, and P920 each carry 4-hydroxyproline. The segment covering 1069-1079 (APGPPGSPGPA) has biased composition (pro residues). Residues 1091 to 1109 (AGAQGPMGPAGPAGARGMP) are compositionally biased toward low complexity. Over residues 1115–1129 (RGDKGETGEAGERGL) the composition is skewed to basic and acidic residues. The residue at position 1130 (K1130) is a 5-hydroxylysine. An O-linked (Gal...) hydroxylysine glycan is attached at K1130. P1144 bears the 3-hydroxyproline mark. Over residues 1148–1157 (SGDQGASGPA) the composition is skewed to low complexity. 4-hydroxyproline is present on P1181. The residue at position 1186 (P1186) is a 3-hydroxyproline. 4-hydroxyproline is present on P1187. The span at 1199–1216 (AGPPGNPGPPGPPGPPGP) shows a compositional bias: pro residues. At P1201 the chain carries 3-hydroxyproline. P1202 and P1205 each carry 4-hydroxyproline. Position 1207 is a 3-hydroxyproline (P1207). A 4-hydroxyproline mark is found at P1208 and P1211. Position 1213 is a 3-hydroxyproline (P1213). The residue at position 1214 (P1214) is a 4-hydroxyproline. Residues 1215-1241 (GPGIDMSAFAGLGQREKGPDPLQYMRA) are nonhelical region (C-terminal). Residues 1253 to 1487 (AEVDATLKSL…GVDIGPVCFL (235 aa)) form the Fibrillar collagen NC1 domain. 3 cysteine pairs are disulfide-bonded: C1283–C1315, C1323–C1485, and C1393–C1438. The Ca(2+) site is built by D1301, N1303, Q1304, C1306, and D1309. The N-linked (GlcNAc...) asparagine glycan is linked to N1388.

The protein belongs to the fibrillar collagen family. Homotrimers of alpha 1(II) chains. Probably 3-hydroxylated on prolines by LEPREL1. Proline residues at the third position of the tripeptide repeating unit (G-X-P) are hydroxylated in some or all of the chains. Proline residues at the second position of the tripeptide repeating unit (G-P-X) are hydroxylated in some of the chains. In terms of processing, O-linked glycans consist of Glc-Gal disaccharides bound to the oxygen atom of post-translationally added hydroxyl groups. Post-translationally, contains mostly 4-hydroxyproline. Prolines at the third position of the tripeptide repeating unit (G-X-P) are 4-hydroxylated in some or all of the chains. Contains 3-hydroxyproline at a few sites. This modification occurs on the first proline residue in the sequence motif Gly-Pro-Hyp, where Hyp is 4-hydroxyproline. In terms of processing, lysine residues at the third position of the tripeptide repeating unit (G-X-Y) are 5-hydroxylated in some or all of the chains. Post-translationally, O-glycosylated on hydroxylated lysine residues. The O-linked glycan consists of a Glc-Gal disaccharide.

It localises to the secreted. The protein resides in the extracellular space. The protein localises to the extracellular matrix. Functionally, type II collagen is specific for cartilaginous tissues. It is essential for the normal embryonic development of the skeleton, for linear growth and for the ability of cartilage to resist compressive forces. The sequence is that of Collagen alpha-1(II) chain from Bos taurus (Bovine).